We begin with the raw amino-acid sequence, 248 residues long: Large ribosomal subunit protein uL4 (248 aa).

The disordered stretch occupies residues 69–92 (HVPRLKNGSRAAKVPQAKGGREAH).

It belongs to the universal ribosomal protein uL4 family. In terms of assembly, part of the 50S ribosomal subunit.

Functionally, one of the primary rRNA binding proteins, this protein initially binds near the 5'-end of the 23S rRNA. It is important during the early stages of 50S assembly. It makes multiple contacts with different domains of the 23S rRNA in the assembled 50S subunit and ribosome. Its function is as follows. Forms part of the polypeptide exit tunnel. The sequence is that of Large ribosomal subunit protein uL4 from Methanoregula boonei (strain DSM 21154 / JCM 14090 / 6A8).